A 1194-amino-acid polypeptide reads, in one-letter code: MFSLDSFRKDRAQHRQRQCKLPPPRLPPMCVNPAPGGTISRASRDLLKEFPQPKNLLNSVIGRALGISHAKDKLVYVHTNGPKKKKVTLHIKWPKSVEVEGYGSKKIDAERQAAAAACQLFKGWGLLGPRNELFDAAKYRVLADRFGSPADSWWRPEPTMPPTSWRQLNPESIRPGGPGGLSRSLGREEEEDEEEELEEGTIDVTDFLSMTQQDSHTPLRDSRGSSFEMTDDDSAIRALTQFPLPKNLLAKVIQIATSSSTAKNLMQFHTVGTKTKLSTLTLLWPCPMTFVAKGRRKAEAENKAAALACKKLKSLGLVDRNNEPLTHAMYNLASLRELGETQRRPCTIQVPEPILRKIETFLNHYPVESSWIAPELRLQSDDILPLGKDSGPLSDPITGKPYVPLLEAEEVRLSQSLLELWRRRGPVWQEAPQLPVDPHRDTILNAIEQHPVVVISGDTGCGKTTRIPQLLLERYVTEGRGARCNVIITQPRRISAVSVAQRVSHELGPSLRRNVGFQVRLESKPPARGGALLFCTVGILLRKLQSNPSLEGVSHVIVDEVHERDVNTDFLLILLKGLQRLNPALRLVLMSATGDNERFSRYFGGCPVIKVPGFMYPVKEHYLEDILAKLGKHQYLHRHRHHESEDECALDLDLVTDLVLHIDARGEPGGILCFLPGWQEIKGVQQRLQEALGMHESKYLILPVHSNIPMMDQKAIFQQPPVGVRKIVLATNIAETSTTINDIVHVVDSGLHKEERYDLKTKVSCLETVWVSRANVIQRRGRAGRCQSGFAYHLFPRSRLEKMVPFQVPEILRTPLENLVLQAKIHMPEKTAVEFLSKAVDSPNIKAVDEAVILLQEIGVLDQREYLTTLGQRLAHISTEPRLAKAIVLAAIFRCLHPLLVVVSCLTRDPFSSSLQNRAEVDKVKALLSHDSGSDHLAFVRAVAGWEEVLRWQDRSSRENYLEENLLYAPSLRFIHGLIKQFSENIYEAFLVGKPSDCTLASAQCNEYSEEEELVKGVLMAGLYPNLIQVRQGKVTRQGKFKPNSVTYRTKSGNILLHKSTINREATRLRSRWLTYFMAVKSNGSVFVRDSSQVHPLAVLLLTDGDVHIRDDGRRATISLSDSDLLRLEGDSRTVRLLKELRRALGRMVERSLRSELAALPPSVQEEHGQLLALLAELLRGPCGSFDVRKTADD.

Positions 1–10 (MFSLDSFRKD) are enriched in basic and acidic residues. The interval 1 to 27 (MFSLDSFRKDRAQHRQRQCKLPPPRLP) is disordered. Ser6 is subject to Phosphoserine. Residues 53–121 (PKNLLNSVIG…QAAAAACQLF (69 aa)) form the DRBM domain. The tract at residues 150 to 199 (ADSWWRPEPTMPPTSWRQLNPESIRPGGPGGLSRSLGREEEEDEEEELEE) is disordered. The span at 188–199 (EEEEDEEEELEE) shows a compositional bias: acidic residues. Phosphoserine is present on residues Ser226 and Ser380. The Helicase ATP-binding domain maps to 444-612 (LNAIEQHPVV…FGGCPVIKVP (169 aa)). 457-464 (GDTGCGKT) is a binding site for ATP. A DEAH box motif is present at residues 559 to 562 (DEVH). A Helicase C-terminal domain is found at 654–827 (LVTDLVLHID…NLVLQAKIHM (174 aa)).

This sequence belongs to the DEAD box helicase family. DEAH subfamily. As to quaternary structure, identified in a complex with TFAM and SSBP1. Interacts (via N-terminus) with ZC3HAV1 (via N-terminal domain) in an RNA-independent manner. Found in a complex with GRSF1, DDX28, FASTKD2 and FASTKD5.

The protein localises to the cytoplasm. The protein resides in the mitochondrion. Its subcellular location is the mitochondrion matrix. It localises to the mitochondrion nucleoid. It catalyses the reaction ATP + H2O = ADP + phosphate + H(+). In terms of biological role, RNA-dependent helicase. Plays an important role in the assembly of the mitochondrial large ribosomal subunit. Required for optimal function of the zinc-finger antiviral protein ZC3HAV1. Associates with mitochondrial DNA. Involved in nervous system development and differentiation through its involvement in the up-regulation of a number of genes which are required for neurogenesis, including GSC, NCAM1, neurogenin, and NEUROD. The chain is ATP-dependent RNA helicase DHX30 (DHX30) from Pongo abelii (Sumatran orangutan).